Consider the following 463-residue polypeptide: Retinoic acid receptor RXR-gamma (463 aa).

A modulating region spans residues Met1–Ile138. A disordered region spans residues Ser18–Pro53. The segment covering His21 to Leu33 has biased composition (polar residues). 2 consecutive NR C4-type zinc fingers follow at residues Cys139 to Cys159 and Cys175 to Cys194. Positions Cys139–Met204 form a DNA-binding region, nuclear receptor. The segment at Lys205–Gly230 is hinge. Over residues Glu211–Ser222 the composition is skewed to basic and acidic residues. The segment at Glu211–Glu232 is disordered. In terms of domain architecture, NR LBD spans His231 to Pro459.

Belongs to the nuclear hormone receptor family. NR2 subfamily. In terms of assembly, homodimer. Heterodimer with a RAR molecule. Binds DNA preferentially as a RAR/RXR heterodimer. Interacts with RARA. Post-translationally, acetylated by EP300.

Its subcellular location is the nucleus. It is found in the cytoplasm. Receptor for retinoic acid. Retinoic acid receptors bind as heterodimers to their target response elements in response to their ligands, all-trans or 9-cis retinoic acid, and regulate gene expression in various biological processes. The RAR/RXR heterodimers bind to the retinoic acid response elements (RARE) composed of tandem 5'-AGGTCA-3' sites known as DR1-DR5. The high affinity ligand for RXRs is 9-cis retinoic acid. The chain is Retinoic acid receptor RXR-gamma (RXRG) from Pongo abelii (Sumatran orangutan).